Reading from the N-terminus, the 987-residue chain is VPS35 endosomal protein sorting factor-like (987 aa).

Low complexity predominate over residues Met-1 to Pro-23. Residues Met-1 to Lys-115 form a disordered region. Residues Asn-43 to Lys-63 are compositionally biased toward basic and acidic residues. The span at Gln-66–Pro-111 shows a compositional bias: low complexity.

It belongs to the VPS35L family. Component of the heterotrimeric retriever complex.

It is found in the endosome. Its function is as follows. Acts as a component of the retriever complex. The retriever complex is a heterotrimeric complex related to retromer cargo-selective complex (CSC) and essential for retromer-independent retrieval and recycling of numerous cargos. This Dictyostelium discoideum (Social amoeba) protein is VPS35 endosomal protein sorting factor-like.